A 147-amino-acid polypeptide reads, in one-letter code: Large ribosomal subunit protein uL13 (147 aa).

It belongs to the universal ribosomal protein uL13 family. In terms of assembly, part of the 50S ribosomal subunit.

In terms of biological role, this protein is one of the early assembly proteins of the 50S ribosomal subunit, although it is not seen to bind rRNA by itself. It is important during the early stages of 50S assembly. The polypeptide is Large ribosomal subunit protein uL13 (Pseudarthrobacter chlorophenolicus (strain ATCC 700700 / DSM 12829 / CIP 107037 / JCM 12360 / KCTC 9906 / NCIMB 13794 / A6) (Arthrobacter chlorophenolicus)).